Consider the following 239-residue polypeptide: Putative CCR4-associated factor 1 homolog 8 (239 aa).

A divalent metal cation is bound by residues Asp-17, Glu-19, Asp-133, and Asn-204.

This sequence belongs to the CAF1 family. Component of the CCR4-NOT complex, at least composed of CRR4 and CAF1 proteins. The cofactor is a divalent metal cation.

It is found in the nucleus. The protein resides in the cytoplasm. The catalysed reaction is Exonucleolytic cleavage of poly(A) to 5'-AMP.. Ubiquitous transcription factor required for a diverse set of processes. It is a component of the CCR4 complex involved in the control of gene expression. This Arabidopsis thaliana (Mouse-ear cress) protein is Putative CCR4-associated factor 1 homolog 8 (CAF1-8).